A 242-amino-acid chain; its full sequence is Biosynthetic peptidoglycan transglycosylase (242 aa).

Residues 19–39 (ILAALAVFWGGGIALFSVVPV) form a helical membrane-spanning segment.

It belongs to the glycosyltransferase 51 family.

The protein resides in the cell inner membrane. The enzyme catalyses [GlcNAc-(1-&gt;4)-Mur2Ac(oyl-L-Ala-gamma-D-Glu-L-Lys-D-Ala-D-Ala)](n)-di-trans,octa-cis-undecaprenyl diphosphate + beta-D-GlcNAc-(1-&gt;4)-Mur2Ac(oyl-L-Ala-gamma-D-Glu-L-Lys-D-Ala-D-Ala)-di-trans,octa-cis-undecaprenyl diphosphate = [GlcNAc-(1-&gt;4)-Mur2Ac(oyl-L-Ala-gamma-D-Glu-L-Lys-D-Ala-D-Ala)](n+1)-di-trans,octa-cis-undecaprenyl diphosphate + di-trans,octa-cis-undecaprenyl diphosphate + H(+). The protein operates within cell wall biogenesis; peptidoglycan biosynthesis. Its function is as follows. Peptidoglycan polymerase that catalyzes glycan chain elongation from lipid-linked precursors. In Salmonella choleraesuis (strain SC-B67), this protein is Biosynthetic peptidoglycan transglycosylase.